The following is a 361-amino-acid chain: Queuine tRNA-ribosyltransferase (361 aa).

Residue aspartate 89 is the Proton acceptor of the active site. Substrate contacts are provided by residues 89–93 (DSGGF), aspartate 143, glutamine 185, and glycine 212. The RNA binding stretch occupies residues 243–249 (GVGTPED). The Nucleophile role is filled by aspartate 262. An RNA binding; important for wobble base 34 recognition region spans residues 267–271 (TRNAR). 4 residues coordinate Zn(2+): cysteine 300, cysteine 302, cysteine 305, and histidine 331.

It belongs to the queuine tRNA-ribosyltransferase family. In terms of assembly, homodimer. Within each dimer, one monomer is responsible for RNA recognition and catalysis, while the other monomer binds to the replacement base PreQ1. Zn(2+) serves as cofactor.

It carries out the reaction 7-aminomethyl-7-carbaguanine + guanosine(34) in tRNA = 7-aminomethyl-7-carbaguanosine(34) in tRNA + guanine. Its pathway is tRNA modification; tRNA-queuosine biosynthesis. Functionally, catalyzes the base-exchange of a guanine (G) residue with the queuine precursor 7-aminomethyl-7-deazaguanine (PreQ1) at position 34 (anticodon wobble position) in tRNAs with GU(N) anticodons (tRNA-Asp, -Asn, -His and -Tyr). Catalysis occurs through a double-displacement mechanism. The nucleophile active site attacks the C1' of nucleotide 34 to detach the guanine base from the RNA, forming a covalent enzyme-RNA intermediate. The proton acceptor active site deprotonates the incoming PreQ1, allowing a nucleophilic attack on the C1' of the ribose to form the product. After dissociation, two additional enzymatic reactions on the tRNA convert PreQ1 to queuine (Q), resulting in the hypermodified nucleoside queuosine (7-(((4,5-cis-dihydroxy-2-cyclopenten-1-yl)amino)methyl)-7-deazaguanosine). The polypeptide is Queuine tRNA-ribosyltransferase (Nitrosomonas eutropha (strain DSM 101675 / C91 / Nm57)).